The primary structure comprises 424 residues: GTPase Obg (424 aa).

The Obg domain occupies 1–158 (MFVDKARIFV…RWISLELKLL (158 aa)). An OBG-type G domain is found at 159 to 331 (ADVGLIGFPN…LLKECARVLS (173 aa)). GTP-binding positions include 165–172 (GFPNVGKS), 190–194 (FTTIT), 212–215 (DIPG), 282–285 (NKAD), and 312–314 (SAA). Serine 172 and threonine 192 together coordinate Mg(2+). Residues 345–424 (RFVPEDKHFT…LNDFEFEFLK (80 aa)) enclose the OCT domain.

The protein belongs to the TRAFAC class OBG-HflX-like GTPase superfamily. OBG GTPase family. As to quaternary structure, monomer. It depends on Mg(2+) as a cofactor.

It is found in the cytoplasm. Functionally, an essential GTPase which binds GTP, GDP and possibly (p)ppGpp with moderate affinity, with high nucleotide exchange rates and a fairly low GTP hydrolysis rate. Plays a role in control of the cell cycle, stress response, ribosome biogenesis and in those bacteria that undergo differentiation, in morphogenesis control. This chain is GTPase Obg, found in Clostridium acetobutylicum (strain ATCC 824 / DSM 792 / JCM 1419 / IAM 19013 / LMG 5710 / NBRC 13948 / NRRL B-527 / VKM B-1787 / 2291 / W).